The sequence spans 1052 residues: Germline survival defective-1 (1052 aa).

The first 25 residues, 1–25 (MRCLISYLFHSFLIFLKFIRSDVTA), serve as a signal peptide directing secretion. Disordered regions lie at residues 41 to 320 (LMKS…DPKN), 478 to 543 (VNGI…QSVP), 667 to 689 (PSSQAVGDENDTDSDHESEEEFE), 933 to 965 (KQTLLSKKGDHRTRSDGEGSQQNGGTSSSNSYA), and 1033 to 1052 (SNNTGGVNGNSGGGNQNSNF). A compositionally biased stretch (low complexity) spans 67 to 145 (ATATAAATTQ…SSTSSTSQQT (79 aa)). A compositionally biased stretch (polar residues) spans 163–172 (TSNTANSQSG). A compositionally biased stretch (basic and acidic residues) spans 178-190 (TNKDRPKEKEKNT). Residues 244–279 (NAKSSGFLSNSSLSSAGQISASSAPPVSTTPTAIPI) are compositionally biased toward low complexity. Residues 305 to 320 (KRDEEPMPYKSTDPKN) are compositionally biased toward basic and acidic residues. The gld-4 binding stretch occupies residues 424–732 (QHPPGLPPLL…QIEKNDNLFS (309 aa)). Over residues 480–514 (GISNNIPSDRQQLDSKPNTARGSSGNINQSNTTSP) the composition is skewed to polar residues. The span at 674 to 689 (DENDTDSDHESEEEFE) shows a compositional bias: acidic residues. The interval 892–1052 (PIELPVNMQP…SGGGNQNSNF (161 aa)) is gld-3 binding. The span at 950–963 (EGSQQNGGTSSSNS) shows a compositional bias: low complexity. The span at 1038–1052 (GVNGNSGGGNQNSNF) shows a compositional bias: gly residues.

As to quaternary structure, isoform C interacts (via C-terminus) with gld-3 isoform A (via C-terminus) in an RNA-independent manner. Isoform C interacts with gld-4. Expressed in the germline (at protein level). In the early embryo is expressed in all cells, then becomes gradually restricted to the germ cell lineage and enriches in P granules (at protein level). In adult hermaphrodites, is expressed in the mitotic region, accumulates during early stages of meiotic prophase I and is slightly less abundant in maturing oocytes (at protein level).

It localises to the cytoplasm. The protein localises to the cytoplasmic granule. Functionally, required maternally for germline survival by forming a maternal complex with gld-3. During hermaphrodite development forms a complex with gld-3 which promotes the sperm/oocyte switch freeing the translational repressor fbf to turn off sperm promoting factors. Required for proper oocyte differentiation and oogenic meiotic arrest. Stimulates the enzymatic activity of gld-4 and together they prevent gld-1 mRNA degradation. This is Germline survival defective-1 from Caenorhabditis elegans.